A 403-amino-acid polypeptide reads, in one-letter code: Acetylornithine aminotransferase (403 aa).

Pyridoxal 5'-phosphate-binding positions include 107–108 and phenylalanine 140; that span reads GA. Arginine 143 is a N(2)-acetyl-L-ornithine binding site. 225-228 is a binding site for pyridoxal 5'-phosphate; that stretch reads DEVQ. At lysine 254 the chain carries N6-(pyridoxal phosphate)lysine. Serine 282 lines the N(2)-acetyl-L-ornithine pocket. Threonine 283 is a pyridoxal 5'-phosphate binding site.

Belongs to the class-III pyridoxal-phosphate-dependent aminotransferase family. ArgD subfamily. As to quaternary structure, homodimer. It depends on pyridoxal 5'-phosphate as a cofactor.

The protein resides in the cytoplasm. It catalyses the reaction N(2)-acetyl-L-ornithine + 2-oxoglutarate = N-acetyl-L-glutamate 5-semialdehyde + L-glutamate. The protein operates within amino-acid biosynthesis; L-arginine biosynthesis; N(2)-acetyl-L-ornithine from L-glutamate: step 4/4. This chain is Acetylornithine aminotransferase, found in Vibrio vulnificus (strain YJ016).